We begin with the raw amino-acid sequence, 332 residues long: Eukaryotic translation initiation factor 3 subunit H (332 aa).

The 136-residue stretch at 18-153 (VQVDGLTVLK…LKAFRLSDEM (136 aa)) folds into the MPN domain. The disordered stretch occupies residues 251-285 (QQQKENYLQRRQQENQSRIQRGEDPLPDEDLSKMF).

The protein belongs to the eIF-3 subunit H family. Component of the eukaryotic translation initiation factor 3 (eIF-3) complex.

Its subcellular location is the cytoplasm. Functionally, component of the eukaryotic translation initiation factor 3 (eIF-3) complex, which is involved in protein synthesis of a specialized repertoire of mRNAs and, together with other initiation factors, stimulates binding of mRNA and methionyl-tRNAi to the 40S ribosome. The eIF-3 complex specifically targets and initiates translation of a subset of mRNAs involved in cell proliferation. This is Eukaryotic translation initiation factor 3 subunit H from Nematostella vectensis (Starlet sea anemone).